A 464-amino-acid polypeptide reads, in one-letter code: ATP synthase subunit beta 2 (464 aa).

An ATP-binding site is contributed by 153–160 (GGAGVGKT).

The protein belongs to the ATPase alpha/beta chains family. In terms of assembly, F-type ATPases have 2 components, CF(1) - the catalytic core - and CF(0) - the membrane proton channel. CF(1) has five subunits: alpha(3), beta(3), gamma(1), delta(1), epsilon(1). CF(0) has three main subunits: a(1), b(2) and c(9-12). The alpha and beta chains form an alternating ring which encloses part of the gamma chain. CF(1) is attached to CF(0) by a central stalk formed by the gamma and epsilon chains, while a peripheral stalk is formed by the delta and b chains.

The protein localises to the cell inner membrane. It carries out the reaction ATP + H2O + 4 H(+)(in) = ADP + phosphate + 5 H(+)(out). Produces ATP from ADP in the presence of a proton gradient across the membrane. The catalytic sites are hosted primarily by the beta subunits. The polypeptide is ATP synthase subunit beta 2 (Paraburkholderia xenovorans (strain LB400)).